Reading from the N-terminus, the 50-residue chain is Large ribosomal subunit protein bL33 (50 aa).

The protein belongs to the bacterial ribosomal protein bL33 family.

This Aquifex aeolicus (strain VF5) protein is Large ribosomal subunit protein bL33 (rpmG).